The sequence spans 492 residues: Glutamyl-tRNA(Gln) amidotransferase subunit A (492 aa).

Residues K79 and S154 each act as charge relay system in the active site. S178 acts as the Acyl-ester intermediate in catalysis.

Belongs to the amidase family. GatA subfamily. As to quaternary structure, heterotrimer of A, B and C subunits.

The catalysed reaction is L-glutamyl-tRNA(Gln) + L-glutamine + ATP + H2O = L-glutaminyl-tRNA(Gln) + L-glutamate + ADP + phosphate + H(+). Allows the formation of correctly charged Gln-tRNA(Gln) through the transamidation of misacylated Glu-tRNA(Gln) in organisms which lack glutaminyl-tRNA synthetase. The reaction takes place in the presence of glutamine and ATP through an activated gamma-phospho-Glu-tRNA(Gln). The polypeptide is Glutamyl-tRNA(Gln) amidotransferase subunit A (Acinetobacter baumannii (strain AB0057)).